The following is an 856-amino-acid chain: Glucans biosynthesis glucosyltransferase H (856 aa).

6 helical membrane-spanning segments follow: residues 144-164 (ILLVLMLGQTIVAGWYMKGIM), 198-218 (ILIMFGILFCWVSAGFWTALM), 517-537 (VFLTGVMSYLSAPLWFFFLVL), 574-594 (LFSTTIVLLFLPKLLSIILIW), 608-628 (TLSMLLEMLFSMLLAPVRMIF), and 691-711 (IVGSLMLSIPVSVISSRVGLG).

This sequence belongs to the glycosyltransferase 2 family. OpgH subfamily.

It is found in the cell inner membrane. Its pathway is glycan metabolism; osmoregulated periplasmic glucan (OPG) biosynthesis. Involved in the biosynthesis of osmoregulated periplasmic glucans (OPGs). The protein is Glucans biosynthesis glucosyltransferase H of Pseudomonas fluorescens (strain Pf0-1).